Consider the following 751-residue polypeptide: Nibrin (751 aa).

The 60-residue stretch at 24-83 folds into the FHA domain; that stretch reads YVVGRKNCGILIENDQSISRNHAVLTVNFPVTSLSQTDEIPTLTIKDNSKYGTFVNEEKM. BRCT domains lie at 105 to 181 and 224 to 315; these read KFRV…SEFL and GKTF…LAVI. Residues 111–328 form a mediates interaction with SP100 region; the sequence is EPLVVCSSCL…TENYCNPQGQ (218 aa). Residues 221 to 403 are interaction with MTOR, MAPKAP1 and RICTOR; sequence IFKGKTFVFL…SRKLSQETFN (183 aa). At Thr-337 the chain carries Phosphothreonine. Ser-343 bears the Phosphoserine; by ATM mark. Phosphoserine occurs at positions 347 and 398. Positions 389 to 418 are disordered; that stretch reads GLEQSSRKLSQETFNIKEAPKPSSKANNVA. Ser-433 bears the Phosphoserine; by CDK2 mark. Lys-436 participates in a covalent cross-link: Glycyl lysine isopeptide (Lys-Gly) (interchain with G-Cter in ubiquitin). 2 disordered regions span residues 444–479 and 491–550; these read KDWT…SSCK and EQTQ…RKRK. A compositionally biased stretch (polar residues) spans 446-457; sequence WTSQQQQNSIKN. The Nuclear localization signal signature appears at 461 to 467; that stretch reads PCTRKRE. Composition is skewed to basic and acidic residues over residues 502–518 and 528–539; these read KSKE…READ and ELNRKSPDRKPL. The residue at position 508 (Ser-508) is a Phosphoserine. Glycyl lysine isopeptide (Lys-Gly) (interchain with G-Cter in SUMO2) cross-links involve residues Lys-569 and Lys-580. A disordered region spans residues 576-645; sequence VKVEKQEADD…ANSDGLQDSS (70 aa). Basic and acidic residues-rich tracts occupy residues 577–599 and 615–636; these read KVEK…ERNR and EDER…HEIA. Residues Lys-684, Lys-688, and Lys-733 each participate in a glycyl lysine isopeptide (Lys-Gly) (interchain with G-Cter in ubiquitin) cross-link. The segment covering 731–742 has biased composition (basic and acidic residues); sequence QAKEESLADDLF. The segment at 731–751 is disordered; the sequence is QAKEESLADDLFRYNPNVKRR. A FxF/Y motif motif is present at residues 738 to 747; sequence ADDLFRYNPN.

The protein belongs to the Nibrin family. In terms of assembly, component of the MRN complex composed of two heterodimers RAD50 and MRE11 associated with a single NBN. The MRN complexes dimerize on DNA to form joined MRN-MRN oligomers required for DNA double-strand break repair. As part of the MRN complex, interacts with MCM9; the interaction recruits the complex to DNA repair sites. Component of the BASC complex, at least composed of BRCA1, MSH2, MSH6, MLH1, ATM, BLM, RAD50, MRE11 and NBN. Interacts with histone H2AX; this requires phosphorylation of H2AX on 'Ser-139' and promotes NBN recruitment to DNA damage sites. Interacts with (phosphorylated) MDC1; promoting NBN recruitment to DNA damage sites. Interacts with (phosphorylated) RAD17; promoting NBN recruitment to DNA damage sites. Interacts (via FxF/Y motif) with ATM. Interacts with HJURP. Interacts with INTS3. Interacts with KPNA2. Interacts with TERF2; interaction is disrupted upon NBN phosphorylation by CDK2. Interacts with (phosphorylated) RBBP8/CtIP; the interaction links the role of the MRN complex in DNA double-strand break sensing to resection. Interacts with SP100; recruits NBN to PML bodies. Interacts with ATF2. Interacts with MTOR, MAPKAP1 isoform 2 and RICTOR; indicative for an association with the mTORC2 complex. Interacts with MRNIP. Interacts with UFL1; promoting UFL1 recruitment to double-strand breaks following DNA damage. Interacts with CYREN (via XLF motif). Ubiquitinated at Lys-436 via 'Lys-6'-linked ubiquitin chains by RNF8, promoting NBN recruitment to DNA double-strand breaks (DSBs). Ubiquitinated at Lys-684 and Lys-688 via 'Lys-63'-linked ubiquitin chains by PELI1: ubiquitination takes place following PELI1 phosphorylation and promotes ATM activation and DNA repair. Ubiquitinated at Lys-733 via 'Lys-63'-linked ubiquitin chains by the SCF(SKP2) complex: ubiquitination takes place following SKP2 phosphorylation and promotes ATM activation and DNA repair. Post-translationally, phosphorylated by ATM in response of ionizing radiation, and such phosphorylation is responsible intra-S phase checkpoint control and telomere maintenance. Phosphorylated at Ser-433 by CDK2 in S/G2 phases abolishes interaction with TERF2, enabling DCLRE1B/Apollo recruitment to telomeres. Phosphorylation at Ser-433 in response to dysfunctional telomeres promotes non-homologous end joining repair at telomeres, while dephosphorylation by PPP1CA promotes microhomology-mediated end-joining (MMEJ) repair. In terms of tissue distribution, high expression in the liver, heart and testis. Low expression in all other tissues analyzed. In the cerebellum the postmitotic Purkinje cells are marked specifically.

The protein resides in the nucleus. Its subcellular location is the chromosome. It localises to the PML body. It is found in the telomere. In terms of biological role, component of the MRN complex, which plays a central role in double-strand break (DSB) repair, DNA recombination, maintenance of telomere integrity and meiosis. The MRN complex is involved in the repair of DNA double-strand breaks (DSBs) via homologous recombination (HR), an error-free mechanism which primarily occurs during S and G2 phases. The complex (1) mediates the end resection of damaged DNA, which generates proper single-stranded DNA, a key initial steps in HR, and is (2) required for the recruitment of other repair factors and efficient activation of ATM and ATR upon DNA damage. The MRN complex possesses single-strand endonuclease activity and double-strand-specific 3'-5' exonuclease activity, which are provided by MRE11, to initiate end resection, which is required for single-strand invasion and recombination. Within the MRN complex, NBN acts as a protein-protein adapter, which specifically recognizes and binds phosphorylated proteins, promoting their recruitment to DNA damage sites. Recruits MRE11 and RAD50 components of the MRN complex to DSBs in response to DNA damage. Promotes the recruitment of PI3/PI4-kinase family members ATM, ATR, and probably DNA-PKcs to the DNA damage sites, activating their functions. Mediates the recruitment of phosphorylated RBBP8/CtIP to DSBs, leading to cooperation between the MRN complex and RBBP8/CtIP to initiate end resection. RBBP8/CtIP specifically promotes the endonuclease activity of the MRN complex to clear DNA ends containing protein adducts. The MRN complex is also required for the processing of R-loops. NBN also functions in telomere length maintenance via its interaction with TERF2: interaction with TERF2 during G1 phase preventing recruitment of DCLRE1B/Apollo to telomeres. NBN also promotes DNA repair choice at dysfunctional telomeres: NBN phosphorylation by CDK2 promotes non-homologous end joining repair at telomeres, while unphosphorylated NBN promotes microhomology-mediated end-joining (MMEJ) repair. Enhances AKT1 phosphorylation possibly by association with the mTORC2 complex. The sequence is that of Nibrin from Mus musculus (Mouse).